Reading from the N-terminus, the 86-residue chain is Immunity protein CdiI-1 (86 aa).

In terms of assembly, interacts with the C-terminal fragment (CT) of cognate toxin protein CdiA-EC869.

Functionally, immunity protein component of a toxin-immunity protein module, which functions as a cellular contact-dependent growth inhibition (CDI) system. CDI modules allow bacteria to communicate with and inhibit the growth of closely related neighboring bacteria in a contact-dependent fashion. Neutralizes the toxic activity of cognate toxin CdiA-EC869 (the C-terminal 289 residue CT fragment). Does not inhibit toxic activity of CdiA from other toxin-immunity modules or strains of E.coli. The sequence is that of Immunity protein CdiI-1 from Escherichia coli O157:H7 (strain EC869).